The sequence spans 309 residues: Bombesin receptor-activated protein C6orf89 homolog (309 aa).

At 1–59 (MGSSLSEPCIYDKLSESIDILRQSGYRYGMSEREIEKFIKQVLETNEPRREPPQFPILR) the chain is on the cytoplasmic side. Residues 60–80 (ATVKFVVAVGVVLMAVLVFTY) traverse the membrane as a helical segment. Residues 81–309 (PQSPVLMGSV…QDVQCDSAVL (229 aa)) lie on the Extracellular side of the membrane.

In terms of assembly, homodimer.

Its subcellular location is the golgi apparatus membrane. It localises to the cytoplasm. Functionally, exhibits histone deacetylase (HDAC) enhancer properties. May play a role in progression through the cell cycle. The sequence is that of Bombesin receptor-activated protein C6orf89 homolog from Danio rerio (Zebrafish).